The chain runs to 235 residues: MPKLSKRITGLLAKVEDRVYQPIEAIQLVKENATAKFDETIEAHVRLGIDPKYTDQQLRTTVALPQGTGQSVRIAVITRGEKLAEAKTAGAELAGDDDLVESIGKGQMDFDLLIATPDMMPKVAKLGRVLGPRGLMPNPKAGTVTTDLAAAIKEFKAGKLEFRADRAGIVHVRFGKASFSADALLENLKTLQETIDRNKPSGAKGRYWKSLYITSTMGPSVEVDVTALQDIEEDA.

The protein belongs to the universal ribosomal protein uL1 family. Part of the 50S ribosomal subunit.

Binds directly to 23S rRNA. The L1 stalk is quite mobile in the ribosome, and is involved in E site tRNA release. Functionally, protein L1 is also a translational repressor protein, it controls the translation of the L11 operon by binding to its mRNA. This is Large ribosomal subunit protein uL1 from Prochlorococcus marinus (strain MIT 9303).